We begin with the raw amino-acid sequence, 505 residues long: Glycerol kinase (505 aa).

Thr12 is a binding site for ADP. ATP is bound by residues Thr12, Thr13, and Ser14. Thr12 provides a ligand contact to sn-glycerol 3-phosphate. Arg16 lines the ADP pocket. Sn-glycerol 3-phosphate contacts are provided by Arg82, Glu83, Tyr134, and Asp249. Glycerol is bound by residues Arg82, Glu83, Tyr134, Asp249, and Gln250. Positions 271 and 315 each coordinate ADP. ATP-binding residues include Thr271, Gly315, Gln319, and Gly416. 2 residues coordinate ADP: Gly416 and Asn420.

It belongs to the FGGY kinase family.

The enzyme catalyses glycerol + ATP = sn-glycerol 3-phosphate + ADP + H(+). It participates in polyol metabolism; glycerol degradation via glycerol kinase pathway; sn-glycerol 3-phosphate from glycerol: step 1/1. Its activity is regulated as follows. Inhibited by fructose 1,6-bisphosphate (FBP). Functionally, key enzyme in the regulation of glycerol uptake and metabolism. Catalyzes the phosphorylation of glycerol to yield sn-glycerol 3-phosphate. The sequence is that of Glycerol kinase from Mycolicibacterium vanbaalenii (strain DSM 7251 / JCM 13017 / BCRC 16820 / KCTC 9966 / NRRL B-24157 / PYR-1) (Mycobacterium vanbaalenii).